Consider the following 347-residue polypeptide: Putative phosphoesterase 078R (347 aa).

Positions 52, 87, and 211 each coordinate a divalent metal cation.

Belongs to the metallophosphoesterase superfamily. IIV-6 244L family.

This Invertebrate iridescent virus 3 (IIV-3) protein is Putative phosphoesterase 078R.